The following is a 182-amino-acid chain: T-cell surface glycoprotein CD3 gamma chain (182 aa).

The signal sequence occupies residues M1–A22. One can recognise an Ig-like domain in the interval Q23–Q98. At Q23–S116 the chain is on the extracellular side. A disulfide bond links C46 and C87. A glycan (N-linked (GlcNAc...) asparagine) is linked at N66. A helical membrane pass occupies residues G117–A137. Over G138–N182 the chain is Cytoplasmic. S145 carries the post-translational modification Phosphoserine. Position 148 is a phosphoserine; by PKC (S148). The ITAM domain maps to D149–N177. A Di-leucine motif motif is present at residues L153 to L154.

The TCR-CD3 complex is composed of a CD3D/CD3E and a CD3G/CD3E heterodimers that preferentially associate with TCRalpha and TCRbeta, respectively, to form TCRalpha/CD3E/CD3G and TCRbeta/CD3G/CD3E trimers. In turn, the hexamer interacts with CD3Z homodimer to form the TCR-CD3 complex. Alternatively, TCRalpha and TCRbeta can be replaced by TCRgamma and TCRdelta. In terms of processing, phosphorylated on Tyr residues after T-cell receptor triggering by LCK in association with CD4/CD8. Phosphorylated also by PKC; leading to the TCR complex down-regulation. Phosphorylated on Tyr residues after T-cell receptor triggering by LCK in association with CD4/CD8.

The protein localises to the cell membrane. Its function is as follows. Part of the TCR-CD3 complex present on T-lymphocyte cell surface that plays an essential role in adaptive immune response. When antigen presenting cells (APCs) activate T-cell receptor (TCR), TCR-mediated signals are transmitted across the cell membrane by the CD3 chains CD3D, CD3E, CD3G and CD3Z. All CD3 chains contain immunoreceptor tyrosine-based activation motifs (ITAMs) in their cytoplasmic domain. Upon TCR engagement, these motifs become phosphorylated by Src family protein tyrosine kinases LCK and FYN, resulting in the activation of downstream signaling pathways. In addition to this role of signal transduction in T-cell activation, CD3G plays an essential role in the dynamic regulation of TCR expression at the cell surface. Indeed, constitutive TCR cycling is dependent on the di-leucine-based (diL) receptor-sorting motif present in CD3G. This chain is T-cell surface glycoprotein CD3 gamma chain (CD3G), found in Sus scrofa (Pig).